The primary structure comprises 123 residues: MPTIQQLVRSARTRLSKKTKSPALKSCPQRRGVCTRVYTTTPKKPNSALRKVARVRLTSGFEVTAYIPGIGHNLQEHSVVLVRGGRVKDLPGVRYHIVRGTLDSAGVKDRSQSRSKYGVKRPK.

Belongs to the universal ribosomal protein uS12 family. Part of the 30S ribosomal subunit.

The protein resides in the plastid. It is found in the chloroplast. In terms of biological role, with S4 and S5 plays an important role in translational accuracy. Located at the interface of the 30S and 50S subunits. This Chlorella vulgaris (Green alga) protein is Small ribosomal subunit protein uS12c (rps12).